A 392-amino-acid polypeptide reads, in one-letter code: Phosphoglycerate kinase (392 aa).

Substrate is bound by residues 21–23 (DFN), Arg36, 59–62 (HLGR), Arg113, and Arg146. Residues Lys197, Glu319, and 345-348 (GGDT) contribute to the ATP site.

This sequence belongs to the phosphoglycerate kinase family. As to quaternary structure, monomer.

Its subcellular location is the cytoplasm. The enzyme catalyses (2R)-3-phosphoglycerate + ATP = (2R)-3-phospho-glyceroyl phosphate + ADP. It participates in carbohydrate degradation; glycolysis; pyruvate from D-glyceraldehyde 3-phosphate: step 2/5. This Francisella tularensis subsp. novicida (strain U112) protein is Phosphoglycerate kinase.